Here is a 466-residue protein sequence, read N- to C-terminus: ATP synthase subunit beta (466 aa).

155–162 contacts ATP; sequence GGAGVGKT.

Belongs to the ATPase alpha/beta chains family. As to quaternary structure, F-type ATPases have 2 components, CF(1) - the catalytic core - and CF(0) - the membrane proton channel. CF(1) has five subunits: alpha(3), beta(3), gamma(1), delta(1), epsilon(1). CF(0) has three main subunits: a(1), b(2) and c(9-12). The alpha and beta chains form an alternating ring which encloses part of the gamma chain. CF(1) is attached to CF(0) by a central stalk formed by the gamma and epsilon chains, while a peripheral stalk is formed by the delta and b chains.

Its subcellular location is the cell inner membrane. The enzyme catalyses ATP + H2O + 4 H(+)(in) = ADP + phosphate + 5 H(+)(out). In terms of biological role, produces ATP from ADP in the presence of a proton gradient across the membrane. The catalytic sites are hosted primarily by the beta subunits. This chain is ATP synthase subunit beta, found in Bordetella bronchiseptica (strain ATCC BAA-588 / NCTC 13252 / RB50) (Alcaligenes bronchisepticus).